Consider the following 685-residue polypeptide: Nucleolar protein 4 (685 aa).

Positions 1–21 (MEETIENVEVPSSNVSKQNDD) are disordered. Residues 26 to 103 (KTLFVRSIPQ…HILRVDIAKR (78 aa)) enclose the RRM 1 domain. Positions 106 to 123 (RSKKTSEVVEKSTPESSE) are enriched in basic and acidic residues. The tract at residues 106–142 (RSKKTSEVVEKSTPESSEKITGQNNEDEDDADGEDSM) is disordered. The segment covering 130–140 (NEDEDDADGED) has biased composition (acidic residues). Positions 147-225 (PKLIIRNMPW…RKVAVDFAVQ (79 aa)) constitute an RRM 2 domain. The segment covering 231–242 (DYKKAQPEMNDK) has biased composition (basic and acidic residues). Residues 231–285 (DYKKAQPEMNDKDDNESGNEDAEENHDDEEDENEEEDRQVDQASKNKESKRKAQN) are disordered. Over residues 243 to 268 (DDNESGNEDAEENHDDEEDENEEEDR) the composition is skewed to acidic residues. At serine 247 the chain carries Phosphoserine. RRM domains follow at residues 290–383 (FSVF…PTLV) and 462–612 (TRLA…FAIE). Threonine 379 carries the post-translational modification Phosphothreonine. The segment covering 622–631 (EQLKQARTKR) has biased composition (basic residues). The disordered stretch occupies residues 622–685 (EQLKQARTKR…FKRKRKHAKK (64 aa)). Basic and acidic residues predominate over residues 645-672 (SENKKPKKEEATTPTNPDDKKMGDDIKR). Basic residues predominate over residues 674–685 (IGFKRKRKHAKK).

Interacts with NOP1.

It localises to the nucleus. The protein resides in the nucleolus. Its function is as follows. Required for 60S ribosomal subunit synthesis. Probably involved in the processing of 27S rRNA to produce mature 25S rRNA. The polypeptide is Nucleolar protein 4 (NOP4) (Saccharomyces cerevisiae (strain ATCC 204508 / S288c) (Baker's yeast)).